A 263-amino-acid polypeptide reads, in one-letter code: Ribonuclease HII (263 aa).

The RNase H type-2 domain occupies 71-262; sequence QAIAGIDEVG…VKSMCCDSTN (192 aa). A divalent metal cation is bound by residues D77, E78, and D172.

It belongs to the RNase HII family. Mn(2+) serves as cofactor. The cofactor is Mg(2+).

It localises to the cytoplasm. The enzyme catalyses Endonucleolytic cleavage to 5'-phosphomonoester.. Functionally, endonuclease that specifically degrades the RNA of RNA-DNA hybrids. The polypeptide is Ribonuclease HII (Streptococcus pyogenes serotype M5 (strain Manfredo)).